The sequence spans 1859 residues: U3 small nucleolar RNA-associated protein 10 (1859 aa).

The helical transmembrane segment at 258 to 278 (LGAYSVLAVLSAVAPLSIELL) threads the bilayer. Residues 578 to 616 (VLPLLLIAFNDPSSHIRAAFAQLVQLVSEITKAIHENKK) form an HEAT 1 repeat. A helical transmembrane segment spans residues 1392 to 1412 (IVIASISAIVSIVNVLGIKTL). An HEAT 2 repeat occupies 1819–1857 (LVPHIAELLEDDDEAVEIEVREGLVRVIEKVLGEPLDRY).

This sequence belongs to the HEATR1/UTP10 family. As to quaternary structure, component of the ribosomal small subunit (SSU) processome.

It is found in the nucleus. The protein localises to the nucleolus. Its subcellular location is the membrane. Its function is as follows. Involved in nucleolar processing of pre-18S ribosomal RNA. Involved in ribosome biosynthesis. The protein is U3 small nucleolar RNA-associated protein 10 of Lodderomyces elongisporus (strain ATCC 11503 / CBS 2605 / JCM 1781 / NBRC 1676 / NRRL YB-4239) (Yeast).